A 332-amino-acid chain; its full sequence is Glycerol-3-phosphate dehydrogenase [NAD(P)+] (332 aa).

NADPH is bound by residues S11, F12, K32, and K106. Sn-glycerol 3-phosphate contacts are provided by K106, G137, and S139. A141 provides a ligand contact to NADPH. 5 residues coordinate sn-glycerol 3-phosphate: K192, D245, S255, R256, and N257. The active-site Proton acceptor is the K192. R256 contributes to the NADPH binding site. 2 residues coordinate NADPH: V280 and E282.

This sequence belongs to the NAD-dependent glycerol-3-phosphate dehydrogenase family.

The protein localises to the cytoplasm. It catalyses the reaction sn-glycerol 3-phosphate + NAD(+) = dihydroxyacetone phosphate + NADH + H(+). The enzyme catalyses sn-glycerol 3-phosphate + NADP(+) = dihydroxyacetone phosphate + NADPH + H(+). It participates in membrane lipid metabolism; glycerophospholipid metabolism. Functionally, catalyzes the reduction of the glycolytic intermediate dihydroxyacetone phosphate (DHAP) to sn-glycerol 3-phosphate (G3P), the key precursor for phospholipid synthesis. This is Glycerol-3-phosphate dehydrogenase [NAD(P)+] from Staphylococcus aureus (strain bovine RF122 / ET3-1).